A 23-amino-acid chain; its full sequence is Acidic phospholipase A2 CTs-A2 (23 aa).

Requires Ca(2+) as cofactor. Contains 7 disulfide bonds. As to expression, expressed by the venom gland.

It localises to the secreted. The catalysed reaction is a 1,2-diacyl-sn-glycero-3-phosphocholine + H2O = a 1-acyl-sn-glycero-3-phosphocholine + a fatty acid + H(+). Snake venom phospholipase A2 (PLA2) that shows a moderate inhibition of ADP-induced human platelet aggregation when tested on platelet rich plasma. Exhibits moderate hydrolytic activities and prefers the anionic micelles (dPPC with deoxycholate) to the zwitterionic micelles (dPPC with Triton X-100). PLA2 catalyzes the calcium-dependent hydrolysis of the 2-acyl groups in 3-sn-phosphoglycerides. This chain is Acidic phospholipase A2 CTs-A2, found in Trimeresurus stejnegeri (Chinese green tree viper).